Reading from the N-terminus, the 215-residue chain is CASP-like protein 1E1 (215 aa).

At 1 to 51 (MESSRGKPGLNGSGGGAAAFDYSSRRGYYTGAGAALPPLAAGSRAPPVDPC) the chain is on the cytoplasmic side. A helical membrane pass occupies residues 52 to 72 (CVALRVFVLLGTLASAVVMAA). Topologically, residues 73-103 (DRQSTTVQIAAGEQLAPPLRVPVTAKWTYSS) are extracellular. The helical transmembrane segment at 104-124 (AFVYFVVANAMVFAFSAAALA) threads the bilayer. The Cytoplasmic segment spans residues 125-130 (AVRRRS). A helical membrane pass occupies residues 131-151 (AVVPVMVGDLVAMALLFSAVG). Over 152 to 185 (AAAQFGLLGERGNAHVRWAKVCDVYGPFCERAMA) the chain is Extracellular. The chain crosses the membrane as a helical span at residues 186 to 206 (AVVVALIAAFADLVLLMLTIL). Over 207–215 (TIHKASSYY) the chain is Cytoplasmic.

It belongs to the Casparian strip membrane proteins (CASP) family. As to quaternary structure, homodimer and heterodimers.

It localises to the cell membrane. This chain is CASP-like protein 1E1, found in Oryza sativa subsp. indica (Rice).